Consider the following 82-residue polypeptide: Small ribosomal subunit protein bS16 (82 aa).

Belongs to the bacterial ribosomal protein bS16 family.

This chain is Small ribosomal subunit protein bS16, found in Clostridium botulinum (strain ATCC 19397 / Type A).